The primary structure comprises 42 residues: Alpha-lactalbumin I (42 aa).

Positions 1 to 42 (IDYRKCQASQILKEHGMDKVIPLPELVCTMFHISGLSPQAEV) constitute a C-type lysozyme domain.

This sequence belongs to the glycosyl hydrolase 22 family. In terms of assembly, lactose synthase (LS) is a heterodimer of a catalytic component, beta1,4-galactosyltransferase (beta4Gal-T1) and a regulatory component, alpha-lactalbumin (LA). As to expression, mammary gland specific. Secreted in milk.

The protein resides in the secreted. Regulatory subunit of lactose synthase, changes the substrate specificity of galactosyltransferase in the mammary gland making glucose a good acceptor substrate for this enzyme. This enables LS to synthesize lactose, the major carbohydrate component of milk. In other tissues, galactosyltransferase transfers galactose onto the N-acetylglucosamine of the oligosaccharide chains in glycoproteins. The protein is Alpha-lactalbumin I (LALBA) of Macropus giganteus (Eastern gray kangaroo).